A 131-amino-acid chain; its full sequence is UPF0102 protein YraN (131 aa).

Residues 1–19 (MATVPTRSGSPRQLTTKQT) are compositionally biased toward polar residues. The interval 1 to 21 (MATVPTRSGSPRQLTTKQTGD) is disordered.

It belongs to the UPF0102 family.

In Escherichia coli O127:H6 (strain E2348/69 / EPEC), this protein is UPF0102 protein YraN.